The chain runs to 529 residues: CTP synthase (529 aa).

The tract at residues 1-270 (MKYIVVTGGV…ADVVCSYLSL (270 aa)) is amidoligase domain. CTP is bound at residue serine 12. A UTP-binding site is contributed by serine 12. ATP contacts are provided by residues 13-18 (GLGKGI) and aspartate 70. The Mg(2+) site is built by aspartate 70 and glutamate 145. CTP-binding positions include 152–154 (DIE), 191–196 (KTKPTQ), and lysine 227. UTP-binding positions include 191 to 196 (KTKPTQ) and lysine 227. 243–245 (KDA) lines the ATP pocket. Residues 293-525 (VAIVSKYGIE…VEACKKNKSS (233 aa)) form the Glutamine amidotransferase type-1 domain. Position 349 (glycine 349) interacts with L-glutamine. Residue cysteine 376 is the Nucleophile; for glutamine hydrolysis of the active site. L-glutamine-binding positions include 377–380 (LGFQ), glutamate 400, and arginine 455. Catalysis depends on residues histidine 498 and glutamate 500.

The protein belongs to the CTP synthase family. Homotetramer.

It catalyses the reaction UTP + L-glutamine + ATP + H2O = CTP + L-glutamate + ADP + phosphate + 2 H(+). The enzyme catalyses L-glutamine + H2O = L-glutamate + NH4(+). It carries out the reaction UTP + NH4(+) + ATP = CTP + ADP + phosphate + 2 H(+). The protein operates within pyrimidine metabolism; CTP biosynthesis via de novo pathway; CTP from UDP: step 2/2. Its activity is regulated as follows. Allosterically activated by GTP, when glutamine is the substrate; GTP has no effect on the reaction when ammonia is the substrate. The allosteric effector GTP functions by stabilizing the protein conformation that binds the tetrahedral intermediate(s) formed during glutamine hydrolysis. Inhibited by the product CTP, via allosteric rather than competitive inhibition. In terms of biological role, catalyzes the ATP-dependent amination of UTP to CTP with either L-glutamine or ammonia as the source of nitrogen. Regulates intracellular CTP levels through interactions with the four ribonucleotide triphosphates. This chain is CTP synthase, found in Methanoculleus marisnigri (strain ATCC 35101 / DSM 1498 / JR1).